We begin with the raw amino-acid sequence, 526 residues long: ATP synthase subunit alpha (526 aa).

Residue 171-178 (GDRQVGKT) coordinates ATP.

It belongs to the ATPase alpha/beta chains family. In terms of assembly, F-type ATPases have 2 components, CF(1) - the catalytic core - and CF(0) - the membrane proton channel. CF(1) has five subunits: alpha(3), beta(3), gamma(1), delta(1), epsilon(1). CF(0) has three main subunits: a(1), b(2) and c(9-12). The alpha and beta chains form an alternating ring which encloses part of the gamma chain. CF(1) is attached to CF(0) by a central stalk formed by the gamma and epsilon chains, while a peripheral stalk is formed by the delta and b chains.

Its subcellular location is the cell inner membrane. The enzyme catalyses ATP + H2O + 4 H(+)(in) = ADP + phosphate + 5 H(+)(out). Produces ATP from ADP in the presence of a proton gradient across the membrane. The alpha chain is a regulatory subunit. This chain is ATP synthase subunit alpha, found in Azobacteroides pseudotrichonymphae genomovar. CFP2.